Reading from the N-terminus, the 700-residue chain is Protein UL29/28 (700 aa).

Positions 1 to 30 (MSGRRKGCSAATASSSSSSPPSRLPLPGHA) are disordered. Positions 9–21 (SAATASSSSSSPP) are enriched in low complexity.

It belongs to the herpesviridae US22 family. As to quaternary structure, interacts with UL38 and host HDAC1; these interactions are necessary for the HDAC1 interaction with UL38. Interacts with host MTA2.

The protein localises to the virion. It is found in the host nucleus. Its subcellular location is the host cytoplasm. In terms of biological role, contributes to activation of immediate-early gene expression. In Human cytomegalovirus (strain Merlin) (HHV-5), this protein is Protein UL29/28 (UL29).